A 430-amino-acid chain; its full sequence is Tol-Pal system protein TolB (430 aa).

The first 19 residues, 1 to 19 (MKKQIFFTLILLISGLARA), serve as a signal peptide directing secretion.

The protein belongs to the TolB family. In terms of assembly, the Tol-Pal system is composed of five core proteins: the inner membrane proteins TolA, TolQ and TolR, the periplasmic protein TolB and the outer membrane protein Pal. They form a network linking the inner and outer membranes and the peptidoglycan layer.

It localises to the periplasm. Functionally, part of the Tol-Pal system, which plays a role in outer membrane invagination during cell division and is important for maintaining outer membrane integrity. This Hahella chejuensis (strain KCTC 2396) protein is Tol-Pal system protein TolB.